We begin with the raw amino-acid sequence, 361 residues long: UDP-N-acetylglucosamine--N-acetylmuramyl-(pentapeptide) pyrophosphoryl-undecaprenol N-acetylglucosamine transferase (361 aa).

Residues 11–13 (TGG), N120, R161, S188, and Q282 contribute to the UDP-N-acetyl-alpha-D-glucosamine site.

It belongs to the glycosyltransferase 28 family. MurG subfamily.

Its subcellular location is the cell inner membrane. It catalyses the reaction di-trans,octa-cis-undecaprenyl diphospho-N-acetyl-alpha-D-muramoyl-L-alanyl-D-glutamyl-meso-2,6-diaminopimeloyl-D-alanyl-D-alanine + UDP-N-acetyl-alpha-D-glucosamine = di-trans,octa-cis-undecaprenyl diphospho-[N-acetyl-alpha-D-glucosaminyl-(1-&gt;4)]-N-acetyl-alpha-D-muramoyl-L-alanyl-D-glutamyl-meso-2,6-diaminopimeloyl-D-alanyl-D-alanine + UDP + H(+). It participates in cell wall biogenesis; peptidoglycan biosynthesis. Cell wall formation. Catalyzes the transfer of a GlcNAc subunit on undecaprenyl-pyrophosphoryl-MurNAc-pentapeptide (lipid intermediate I) to form undecaprenyl-pyrophosphoryl-MurNAc-(pentapeptide)GlcNAc (lipid intermediate II). This is UDP-N-acetylglucosamine--N-acetylmuramyl-(pentapeptide) pyrophosphoryl-undecaprenol N-acetylglucosamine transferase from Prochlorococcus marinus (strain MIT 9303).